The sequence spans 141 residues: MLTEKTKKELIRLSKVNNYIIKVETNQNFKHQSKCGDQILFQIIETNNGKFNLKHHASGCIVLLASANALNKLCNNKAKSEILNLVQKVINSNFANLDEIDVSLKIFNVFTNTNRKDCFLLPYKSLKDSLESYKPLRRTIR.

This is an uncharacterized protein from Borreliella burgdorferi (strain ATCC 35210 / DSM 4680 / CIP 102532 / B31) (Borrelia burgdorferi).